We begin with the raw amino-acid sequence, 740 residues long: Polyribonucleotide nucleotidyltransferase (740 aa).

Positions 514 and 520 each coordinate Mg(2+). Residues 580 to 639 enclose the KH domain; it reads PRIITVKIPVDKIGEVIGPKRQMINQIQEDTGAEITIEDDGTIYIGAADGPAAEAARATI. The 73-residue stretch at 651–723 folds into the S1 motif domain; sequence GERILGSVVK…SRGKLSLIPV (73 aa).

The protein belongs to the polyribonucleotide nucleotidyltransferase family. Homotrimer. Mg(2+) serves as cofactor.

The protein localises to the cytoplasm. It carries out the reaction RNA(n+1) + phosphate = RNA(n) + a ribonucleoside 5'-diphosphate. In terms of biological role, involved in mRNA degradation. Catalyzes the phosphorolysis of single-stranded polyribonucleotides processively in the 3'- to 5'-direction. The chain is Polyribonucleotide nucleotidyltransferase from Streptomyces antibioticus.